A 73-amino-acid polypeptide reads, in one-letter code: DNA-directed RNA polymerase subunit omega (73 aa).

It belongs to the RNA polymerase subunit omega family. The RNAP catalytic core consists of 2 alpha, 1 beta, 1 beta' and 1 omega subunit. When a sigma factor is associated with the core the holoenzyme is formed, which can initiate transcription.

The catalysed reaction is RNA(n) + a ribonucleoside 5'-triphosphate = RNA(n+1) + diphosphate. Promotes RNA polymerase assembly. Latches the N- and C-terminal regions of the beta' subunit thereby facilitating its interaction with the beta and alpha subunits. This Clostridium novyi (strain NT) protein is DNA-directed RNA polymerase subunit omega.